Consider the following 605-residue polypeptide: DNA primase (605 aa).

A CHC2-type zinc finger spans residues 38–62; it reads CPFHDEKTPSFTVSEDKQICHCFGC. The Toprim domain maps to 260–341; sequence DEIVLLEGFM…NVFVIQLPSG (82 aa). Positions 266, 310, and 312 each coordinate Mg(2+).

The protein belongs to the DnaG primase family. As to quaternary structure, monomer. Interacts with DnaB. It depends on Zn(2+) as a cofactor. Requires Mg(2+) as cofactor.

It carries out the reaction ssDNA + n NTP = ssDNA/pppN(pN)n-1 hybrid + (n-1) diphosphate.. In terms of biological role, RNA polymerase that catalyzes the synthesis of short RNA molecules used as primers for DNA polymerase during DNA replication. This Staphylococcus aureus (strain Mu50 / ATCC 700699) protein is DNA primase.